The chain runs to 208 residues: Small ribosomal subunit protein uS4 (208 aa).

Residues 98-160 (RRLDNVVYRL…SKSKTRFVEI (63 aa)) enclose the S4 RNA-binding domain.

It belongs to the universal ribosomal protein uS4 family. As to quaternary structure, part of the 30S ribosomal subunit. Contacts protein S5. The interaction surface between S4 and S5 is involved in control of translational fidelity.

In terms of biological role, one of the primary rRNA binding proteins, it binds directly to 16S rRNA where it nucleates assembly of the body of the 30S subunit. Its function is as follows. With S5 and S12 plays an important role in translational accuracy. In Caldicellulosiruptor bescii (strain ATCC BAA-1888 / DSM 6725 / KCTC 15123 / Z-1320) (Anaerocellum thermophilum), this protein is Small ribosomal subunit protein uS4.